The following is a 319-amino-acid chain: Dehydrogenase/reductase SDR family member 9 (319 aa).

The signal sequence occupies residues 1-17; sequence MLFWLLVLLILCGFLWN. Residues 34–58 and D83 contribute to the NAD(+) site; that span reads ITGC…HVIA. Position 164 (S164) interacts with substrate. Catalysis depends on Y176, which acts as the Proton acceptor. Position 180 (K180) interacts with NAD(+).

The protein belongs to the short-chain dehydrogenases/reductases (SDR) family. In terms of assembly, homotetramer.

The protein localises to the microsome membrane. The protein resides in the endoplasmic reticulum membrane. The enzyme catalyses 3beta-hydroxy-5alpha-pregnane-20-one + NAD(+) = 5alpha-pregnane-3,20-dione + NADH + H(+). It catalyses the reaction 17beta-hydroxy-5alpha-androstan-3-one + NAD(+) = 5alpha-androstan-3,17-dione + NADH + H(+). It carries out the reaction androsterone + NAD(+) = 5alpha-androstan-3,17-dione + NADH + H(+). The catalysed reaction is 5alpha-androstane-3alpha,17beta-diol + NAD(+) = 17beta-hydroxy-5alpha-androstan-3-one + NADH + H(+). The enzyme catalyses all-trans-retinol + NAD(+) = all-trans-retinal + NADH + H(+). It catalyses the reaction 3alpha-hydroxy-5alpha-pregnan-20-one + NAD(+) = 5alpha-pregnane-3,20-dione + NADH + H(+). Functionally, 3-alpha-hydroxysteroid dehydrogenase that converts 3-alpha-tetrahydroprogesterone (allopregnanolone) to dihydroxyprogesterone and 3-alpha-androstanediol to dihydroxyprogesterone. Also plays a role in the biosynthesis of retinoic acid from retinaldehyde. Can utilize both NADH and NADPH. In Bos taurus (Bovine), this protein is Dehydrogenase/reductase SDR family member 9 (DHRS9).